Reading from the N-terminus, the 422-residue chain is ATP-dependent Clp protease ATP-binding subunit ClpX 1 (422 aa).

A ClpX-type ZB domain is found at 4 to 57; that stretch reads DRKNRESGKLLYCSFCGKSQHEVRKLIAGPAVFVCDECVELCNDIIREDLQGSE. Zn(2+) is bound by residues Cys-16, Cys-19, Cys-38, and Cys-41. 120 to 127 contacts ATP; that stretch reads PTGSGKTL.

It belongs to the ClpX chaperone family. As to quaternary structure, component of the ClpX-ClpP complex. Forms a hexameric ring that, in the presence of ATP, binds to fourteen ClpP subunits assembled into a disk-like structure with a central cavity, resembling the structure of eukaryotic proteasomes.

ATP-dependent specificity component of the Clp protease. It directs the protease to specific substrates. Can perform chaperone functions in the absence of ClpP. The chain is ATP-dependent Clp protease ATP-binding subunit ClpX 1 from Methylococcus capsulatus (strain ATCC 33009 / NCIMB 11132 / Bath).